The following is a 187-amino-acid chain: Ribosome-recycling factor (187 aa).

It belongs to the RRF family.

Its subcellular location is the cytoplasm. Functionally, responsible for the release of ribosomes from messenger RNA at the termination of protein biosynthesis. May increase the efficiency of translation by recycling ribosomes from one round of translation to another. This Methylobacterium radiotolerans (strain ATCC 27329 / DSM 1819 / JCM 2831 / NBRC 15690 / NCIMB 10815 / 0-1) protein is Ribosome-recycling factor.